A 215-amino-acid polypeptide reads, in one-letter code: Deoxyribose-phosphate aldolase (215 aa).

Catalysis depends on aspartate 90, which acts as the Proton donor/acceptor. Lysine 152 (schiff-base intermediate with acetaldehyde) is an active-site residue. Lysine 181 (proton donor/acceptor) is an active-site residue.

It belongs to the DeoC/FbaB aldolase family. DeoC type 1 subfamily.

It is found in the cytoplasm. It carries out the reaction 2-deoxy-D-ribose 5-phosphate = D-glyceraldehyde 3-phosphate + acetaldehyde. Its pathway is carbohydrate degradation; 2-deoxy-D-ribose 1-phosphate degradation; D-glyceraldehyde 3-phosphate and acetaldehyde from 2-deoxy-alpha-D-ribose 1-phosphate: step 2/2. Its function is as follows. Catalyzes a reversible aldol reaction between acetaldehyde and D-glyceraldehyde 3-phosphate to generate 2-deoxy-D-ribose 5-phosphate. The polypeptide is Deoxyribose-phosphate aldolase (Ureaplasma urealyticum serovar 10 (strain ATCC 33699 / Western)).